Consider the following 337-residue polypeptide: MLDSRARLLLKALVERYIADGQPVGSRTLSKASGLELSPATIRNVMSDLEDLGLIVSPHTSAGRIPTARGYRLFVDTMLTTQRDPFSVAGQMARIAPDQPLKVISNAAHMLSSLSQFVGVVMAPRRTSVFRHIEFLRLSEKRFLVIIVSPDGDVQNRVIFTETDYTASQLIEASNFLNSHYAGMAIEEVRERLKNEVEALRGEIATLMQEAVLVSSEAIESRDEVVVSGERNLLAVSDFSSDMGNLRKLFDLFEQKAQLMRLLDVSSRAEGVRIYIGGESQVIPYQELSVVTAPYEVDGQVVGTLGVIGPMRMPYEKMIQIVDITSKLVSTALSHSK.

Belongs to the HrcA family.

Its function is as follows. Negative regulator of class I heat shock genes (grpE-dnaK-dnaJ and groELS operons). Prevents heat-shock induction of these operons. This chain is Heat-inducible transcription repressor HrcA, found in Polaromonas naphthalenivorans (strain CJ2).